We begin with the raw amino-acid sequence, 264 residues long: GATA transcription factor 2 (264 aa).

A compositionally biased stretch (low complexity) spans 29-42; that stretch reads SSSGGSTAATSSSS. Disordered stretches follow at residues 29–57 and 96–192; these read SSSG…HHLP and NPLG…TPQW. The span at 101 to 110 shows a compositional bias: polar residues; the sequence is TMTSVKTETS. Residues 114–121 carry the Nuclear localization signal motif; sequence KPRSKRSR. Over residues 155-164 the composition is skewed to gly residues; sequence SGGGGGGGGR. Residues 175–229 form a GATA-type zinc finger; it reads GGGMRRCTHCASEKTPQWRTGPLGPKTLCNACGVRFKSGRLVPEYRPASSPTFVL.

Belongs to the type IV zinc-finger family. Class A subfamily. Mostly expressed in roots. Also expressed in flowers and leaves, and to a lower extent in stems.

The protein localises to the nucleus. Transcriptional activator that specifically binds 5'-GATA-3' or 5'-GAT-3' motifs within gene promoters. May be involved in the regulation of some light-responsive genes. In Arabidopsis thaliana (Mouse-ear cress), this protein is GATA transcription factor 2 (GATA2).